We begin with the raw amino-acid sequence, 285 residues long: Undecaprenyl-diphosphatase (285 aa).

A run of 7 helical transmembrane segments spans residues 12-34 (IVIA…HAVI), 49-69 (IFLP…LVYF), 93-113 (IHIL…GGLL), 120-140 (LFGT…LLLL), 159-179 (LTYA…LPGI), 234-254 (VATI…AFLM), and 263-283 (WALS…FFIL).

It belongs to the UppP family.

It localises to the cell inner membrane. The catalysed reaction is di-trans,octa-cis-undecaprenyl diphosphate + H2O = di-trans,octa-cis-undecaprenyl phosphate + phosphate + H(+). Catalyzes the dephosphorylation of undecaprenyl diphosphate (UPP). Confers resistance to bacitracin. The polypeptide is Undecaprenyl-diphosphatase (Gluconacetobacter diazotrophicus (strain ATCC 49037 / DSM 5601 / CCUG 37298 / CIP 103539 / LMG 7603 / PAl5)).